A 1509-amino-acid chain; its full sequence is MADPQHVQEEAAGAEAVHAHAARHDGAVVMEILSRSLQSMPASPDVSAYFSGASSRRPSAADEVDDEEALRWAALERLPSFDRLRTGLMRADADSSGVGVGAVGRGRRWYAHREVDVRTLELAQRQAFVERVFHVAEEDNERFLKKLRARIDRAGIQMPTVEVRFRNVNVQAECHVGTRALPTLANVSRDVGESLLGLVGLNFAKRKALHILKDVSGIVRPSRMTLLLGPPSSGKTTLLLALAGKLDPTLETSGEVTYNGYGLDEFVPQKTAAYISQHDVHAGEMTVKETLDFSAKCQGVGQRYELLKELAKKERQLGIYPDPEVDLFMKATSVEGSTLQTDYILRILGLDMCADVIVGDELRRGISGGQKKRLTTAEMLVGPTKVLFMDEISTGLDSSTTFQIIRCIQQIVHMGEATVLVSLLQPAPEIFELFDDVMLLSEGQIVYQGPREHVLEFFERCGFRCPERKGVADFLQEVTSKKDQEQYWIQSEKPYRYVSVPEFVAKFKKFHMGKSLKKQLSVPFNKGKIHKSALVFSKQSVSTLELLKTSCSKEWLLMKRNSFVYIFKTVQGILVALIASTVFLRTQLNTRDEDDGQIYIGALIFVMITNMFSGFADLSLTLARLPVFYKHRDFLFYRPWTFALPNVLVRIPSSLFESIIWVAITYYTMGFAPEASRFFKHLLVVFMLQQMAAGLFRVTAGLCRTVVVTNTAGSLAVLIMFVLGGFILPKDAIPKWWVWAYWCSPLTYAYIAFSSNEMHSPRWMDKFVPDGKRLGVAVLENSGVFTNKEWYWIATGALLGFTILFNVLFSLSLMYLNPVGKPQSILPEETDSQENIQEGKNKAHIKQIITVETPEPVSPNSIITLDKVIQQLRGYSANTSDRSHSYINAAGRTAPGRGMVLPFEPLYMSFNEINYYVDMPLEMKSQGVTADKLQLLSGISGAFRPGVLTALMGVSGAGKTTLMDVLSGRKTGGYIEGEIYISGYPKNQATFARISGYCEQNDIHSPQITVRESLLFSAFLRLPKEVNDQEKKIFVDEVMELVELTGLKDAIVGLPGVNGLSTEQRKRLTIAVELVANPSIIFMDEPTSGLDARAAAIVMRTVRNTVNTGRTVVCTIHQPSIDIFEAFDELLLLKRGGQVIYSGPLGTNSHKVVEYFEAIPGVPKIEENRNPATWMLDVSSAASEVRLEIDFAEYYRSSTMHQRTKALVKELSNPPPGSDDLYFPSQYSQSTFNQFKLCLWKQWWTYWRSPDYNLVRIFFALFTALMLGTIFWRVGHKMESSKDLLVIIGSMYAAVLFVGFENSVTVQPVVAVERTVFYRERAAGMYSAIPYALAQVVVEIPYVFVETVIYTLIVYPMMSFQWTPAKFFWFFYVSFFTFLYFTYYGMMNVSVSPNLQVASILGAAFYTLFNLFSGFFIPRPKIPKWWVWYYWLCPVAWTVYGLIVSQYGDVEDFITVPGQSDQQVRPFIKDYFGYDPDFMGVVAAVLAGFTVFFAFTYAYSIRTLNFQQR.

In terms of domain architecture, ABC transporter 1 spans 196–467; it reads LGLVGLNFAK…FERCGFRCPE (272 aa). 229–236 contacts ATP; sequence GPPSSGKT. One can recognise an ABC transmembrane type-2 1 domain in the interval 545-758; sequence ELLKTSCSKE…AYIAFSSNEM (214 aa). A run of 7 helical transmembrane segments spans residues 563–583, 598–618, 651–671, 682–702, 707–727, 733–753, and 791–811; these read FVYI…STVF, IYIG…FADL, IPSS…TMGF, LLVV…TAGL, VVTN…GGFI, IPKW…YIAF, and YWIA…LFSL. Residues 908–1160 form the ABC transporter 2 domain; it reads MSFNEINYYV…KVVEYFEAIP (253 aa). Position 953 to 960 (953 to 960) interacts with ATP; it reads GVSGAGKT. The ABC transmembrane type-2 2 domain occupies 1233-1447; it reads NQFKLCLWKQ…TVYGLIVSQY (215 aa). 7 helical membrane passes run 1252-1272, 1284-1304, 1336-1356, 1367-1387, 1397-1417, 1425-1445, and 1478-1498; these read YNLV…TIFW, LLVI…ENSV, VVVE…IVYP, FFWF…YGMM, VASI…GFFI, WWVW…LIVS, and FMGV…FTYA.

The protein belongs to the ABC transporter superfamily. ABCG family. PDR (TC 3.A.1.205) subfamily.

The protein localises to the membrane. Functionally, may be a general defense protein. This chain is ABC transporter G family member 38, found in Oryza sativa subsp. japonica (Rice).